Consider the following 295-residue polypeptide: MKKVLIGFASIAMAFTLAACGNKTVATTSGGKITQDEYYSSLKNTTSGKQVLQEMIVNKVLEKQYGDKVSKKTVTKQYNSYKDQYGSSFKSILSSNGMTTSSLKTQIRSNLLLKEAVKANDKISNADLKKEWKSYEPKVTVAQILVSKKSTAEDIIKKLNDGGDFTKLAKQYSTDSSTKNKGGKIAAFDDTNSTLDSSFKKAAFKLDEGKYTTTPVKTEYGYQVIKMINKPSKGKMSDHTKELKERIWNADMSDSTTLRSVITKVLKKGNVTIKDKDLKNVLDDYLGSSASSSTK.

An N-terminal signal peptide occupies residues 1-19 (MKKVLIGFASIAMAFTLAA). Cysteine 20 carries N-palmitoyl cysteine lipidation. The S-diacylglycerol cysteine moiety is linked to residue cysteine 20. Residues 136-229 (EPKVTVAQIL…YGYQVIKMIN (94 aa)) form the PpiC domain.

This sequence belongs to the PrsA family.

The protein localises to the cell membrane. It catalyses the reaction [protein]-peptidylproline (omega=180) = [protein]-peptidylproline (omega=0). Plays a major role in protein secretion by helping the post-translocational extracellular folding of several secreted proteins. This chain is Foldase protein PrsA, found in Pediococcus pentosaceus (strain ATCC 25745 / CCUG 21536 / LMG 10740 / 183-1w).